A 294-amino-acid polypeptide reads, in one-letter code: Cytidine deaminase (294 aa).

CMP/dCMP-type deaminase domains lie at 48 to 168 (DEDA…FGPK) and 186 to 294 (VSGD…VLLG). 89–91 (NME) lines the substrate pocket. H102 lines the Zn(2+) pocket. The active-site Proton donor is E104. Positions 129 and 132 each coordinate Zn(2+).

Belongs to the cytidine and deoxycytidylate deaminase family. Homodimer. The cofactor is Zn(2+).

It carries out the reaction cytidine + H2O + H(+) = uridine + NH4(+). The catalysed reaction is 2'-deoxycytidine + H2O + H(+) = 2'-deoxyuridine + NH4(+). This enzyme scavenges exogenous and endogenous cytidine and 2'-deoxycytidine for UMP synthesis. The protein is Cytidine deaminase of Klebsiella pneumoniae subsp. pneumoniae (strain ATCC 700721 / MGH 78578).